Reading from the N-terminus, the 473-residue chain is Cucurbitadienol 11-hydroxylase (473 aa).

The chain crosses the membrane as a helical span at residues 4–24; that stretch reads VVLGLATLFVAYYIHWINKWR. C422 contributes to the heme binding site.

The protein belongs to the cytochrome P450 family. The cofactor is heme. As to expression, highly expressed in young fruits 15 days after anthesis (15-DAA). Also observed in roots.

It localises to the membrane. It carries out the reaction cucurbitadienol + 2 reduced [NADPH--hemoprotein reductase] + 2 O2 = 11-oxocucurbitadienol + 2 oxidized [NADPH--hemoprotein reductase] + 3 H2O + 2 H(+). The enzyme catalyses cucurbitadienol + reduced [NADPH--hemoprotein reductase] + O2 = 11-hydroxycucurbitadienol + oxidized [NADPH--hemoprotein reductase] + H2O + H(+). The catalysed reaction is 11-hydroxycucurbitadienol + reduced [NADPH--hemoprotein reductase] + O2 = 11-oxocucurbitadienol + oxidized [NADPH--hemoprotein reductase] + 2 H2O + H(+). It catalyses the reaction (24R)-24,25-dihydroxycucurbitadienol + reduced [NADPH--hemoprotein reductase] + O2 = mogrol + oxidized [NADPH--hemoprotein reductase] + H2O + H(+). The protein operates within secondary metabolite biosynthesis; terpenoid biosynthesis. In terms of biological role, hydroxylase involved in the biosynthesis of cucurbitacin and mogroside tetracyclic triterpene natural products (e.g. siamenoside I and mogrosides IV, V and VI). Cucurbitacins have cytotoxic properties and exhibit deterrent taste as a defense barrier against herbivores. Mogrosides are nonsugar highly oxygenated compounds used as high-intensity zero-calorie sweeteners; they also possess pharmacological properties such as regulating immunity, lowering blood sugar and lipid levels, protecting the liver, and acting as antioxidants and antitumor agents. Catalyzes the oxidation of cucurbitadienol at the C-11 position to produce 11-oxocucurbitadienol, a possible biosynthetic intermediate from cucurbitadienol to mogrol. Also mediates the conversion of 24,25-dihydroxycucurbitadienol to mogrol. This chain is Cucurbitadienol 11-hydroxylase, found in Siraitia grosvenorii (Monk's fruit).